We begin with the raw amino-acid sequence, 212 residues long: Cytidylate kinase (212 aa).

7-15 (GPAASGKGT) lines the ATP pocket.

The protein belongs to the cytidylate kinase family. Type 1 subfamily.

The protein resides in the cytoplasm. The enzyme catalyses CMP + ATP = CDP + ADP. The catalysed reaction is dCMP + ATP = dCDP + ADP. This is Cytidylate kinase from Rhodopseudomonas palustris (strain TIE-1).